The primary structure comprises 351 residues: Fe-S cluster assembly protein DRE2 (351 aa).

Residues 1–151 are N-terminal SAM-like domain; sequence MATTGRVLLL…KPDIGAQQAI (151 aa). The tract at residues 93 to 118 is disordered; that stretch reads RNRENKPWGLSDGNGNNANSSRRYND. A compositionally biased stretch (polar residues) spans 105–114; the sequence is GNGNNANSSR. Positions 152 to 243 are linker; it reads PLKLGRRRKE…EDELLDEDDM (92 aa). [2Fe-2S] cluster is bound by residues Cys253, Cys264, Cys267, and Cys269. The tract at residues 253–269 is fe-S binding site A; that stretch reads CRPKPGKRRRACKDCSC. Cys314, Cys317, Cys325, and Cys328 together coordinate [4Fe-4S] cluster. 2 short sequence motifs (cx2C motif) span residues 314-317 and 325-328; these read CGNC and CDGC. Positions 314–328 are fe-S binding site B; sequence CGNCSLGDAFRCDGC.

It belongs to the anamorsin family. As to quaternary structure, monomer. Interacts with TAH18. Interacts with MIA40. The cofactor is [2Fe-2S] cluster. [4Fe-4S] cluster is required as a cofactor.

It is found in the cytoplasm. Its subcellular location is the mitochondrion intermembrane space. In terms of biological role, component of the cytosolic iron-sulfur (Fe-S) protein assembly (CIA) machinery required for the maturation of extramitochondrial Fe-S proteins. Part of an electron transfer chain functioning in an early step of cytosolic Fe-S biogenesis, facilitating the de novo assembly of a [4Fe-4S] cluster on the scaffold complex CFD1-NBP35. Electrons are transferred to DRE2 from NADPH via the FAD- and FMN-containing protein TAH18. TAH18-DRE2 are also required for the assembly of the diferric tyrosyl radical cofactor of ribonucleotide reductase (RNR), probably by providing electrons for reduction during radical cofactor maturation in the catalytic small subunit RNR2. The protein is Fe-S cluster assembly protein DRE2 of Ajellomyces capsulatus (strain H143) (Darling's disease fungus).